Consider the following 59-residue polypeptide: Large ribosomal subunit protein uL30 (59 aa).

This sequence belongs to the universal ribosomal protein uL30 family. As to quaternary structure, part of the 50S ribosomal subunit.

This chain is Large ribosomal subunit protein uL30, found in Haemophilus influenzae (strain 86-028NP).